The following is a 91-amino-acid chain: Small integral membrane protein 12-A (91 aa).

Residues 12–34 (YAPYITFPVAFVVGAVGYQLEWF) form a helical membrane-spanning segment.

It belongs to the SMIM12 family.

The protein resides in the membrane. The protein is Small integral membrane protein 12-A (smim12-a) of Xenopus laevis (African clawed frog).